The chain runs to 97 residues: Co-chaperonin GroES (97 aa).

This sequence belongs to the GroES chaperonin family. In terms of assembly, heptamer of 7 subunits arranged in a ring. Interacts with the chaperonin GroEL.

The protein resides in the cytoplasm. Together with the chaperonin GroEL, plays an essential role in assisting protein folding. The GroEL-GroES system forms a nano-cage that allows encapsulation of the non-native substrate proteins and provides a physical environment optimized to promote and accelerate protein folding. GroES binds to the apical surface of the GroEL ring, thereby capping the opening of the GroEL channel. This is Co-chaperonin GroES from Salmonella agona (strain SL483).